The sequence spans 881 residues: DNA mismatch repair protein MutS (881 aa).

632 to 639 contacts ATP; the sequence is GPNMGGKS.

It belongs to the DNA mismatch repair MutS family.

Functionally, this protein is involved in the repair of mismatches in DNA. It is possible that it carries out the mismatch recognition step. This protein has a weak ATPase activity. The chain is DNA mismatch repair protein MutS from Acinetobacter baylyi (strain ATCC 33305 / BD413 / ADP1).